The sequence spans 302 residues: Protein transport protein SEC13 homolog B (302 aa).

6 WD repeats span residues 9–48 (GHED…GSQQ), 54–95 (GHRG…QWTQ), 101–142 (DHKS…GWDT), 148–201 (AHPV…WKMD), 208–251 (KHTD…EQWE), and 257–296 (DFMT…EWEQ).

Belongs to the WD repeat SEC13 family. Part of the nuclear pore complex (NPC). The NPC has an eight-fold symmetrical structure comprising a central transport channel and two rings, the cytoplasmic and nuclear rings, to which eight filaments are attached. The cytoplasmic filaments have loose ends, while the nuclear filaments are joined in a distal ring, forming a nuclear basket. NPCs are highly dynamic in configuration and composition, and can be devided in 3 subcomplexes, the NUP62 subcomplex, the NUP107-160 subcomplex and the NUP93 subcomplex, containing approximately 30 different nucleoporin proteins. Interacts with MAG5, SEC31A and SEC31B.

The protein localises to the golgi apparatus. It is found in the endoplasmic reticulum. Its subcellular location is the nucleus envelope. The protein resides in the nucleus. It localises to the nuclear pore complex. Functionally, required for protein transport from the endoplasmic reticulum to the Golgi apparatus. The sequence is that of Protein transport protein SEC13 homolog B from Arabidopsis thaliana (Mouse-ear cress).